A 312-amino-acid chain; its full sequence is Glycine--tRNA ligase alpha subunit (312 aa).

This sequence belongs to the class-II aminoacyl-tRNA synthetase family. Tetramer of two alpha and two beta subunits.

It localises to the cytoplasm. It carries out the reaction tRNA(Gly) + glycine + ATP = glycyl-tRNA(Gly) + AMP + diphosphate. The protein is Glycine--tRNA ligase alpha subunit of Thiobacillus denitrificans (strain ATCC 25259 / T1).